We begin with the raw amino-acid sequence, 107 residues long: Heme-degrading monooxygenase (107 aa).

Residues 2 to 94 enclose the ABM domain; that stretch reads IIVTNTAKIT…YILDNKISYY (93 aa). Residue Asn-6 participates in Fe cation binding. His-76 contributes to the heme binding site.

Belongs to the antibiotic biosynthesis monooxygenase family. Heme-degrading monooxygenase IsdG subfamily. In terms of assembly, homodimer.

It localises to the cytoplasm. It carries out the reaction heme b + 3 reduced [NADPH--hemoprotein reductase] + 3 O2 = biliverdin IXalpha + CO + Fe(2+) + 3 oxidized [NADPH--hemoprotein reductase] + 3 H2O + H(+). Its function is as follows. Allows bacterial pathogens to use the host heme as an iron source. Catalyzes the oxidative degradation of the heme macrocyclic porphyrin ring to the biliverdin in the presence of a suitable electron donor such as ascorbate or NADPH--cytochrome P450 reductase, with subsequent release of free iron. In Bacillus cereus (strain AH187), this protein is Heme-degrading monooxygenase.